The following is a 92-amino-acid chain: C-C motif chemokine 4 (92 aa).

The first 23 residues, 1–23 (MKLCVTVLSLLVLVAAFCSPALS), serve as a signal peptide directing secretion. Intrachain disulfides connect Cys34–Cys58 and Cys35–Cys74.

This sequence belongs to the intercrine beta (chemokine CC) family. As to quaternary structure, homodimer. Interacts with CCR5.

It localises to the secreted. Its function is as follows. Monokine with inflammatory and chemokinetic properties. This Sus scrofa (Pig) protein is C-C motif chemokine 4 (CCL4).